The primary structure comprises 267 residues: B3 domain-containing protein At3g11580 (267 aa).

Residues 29–143 (FEKSLTPSDV…RLFIGWRRRG (115 aa)) constitute a DNA-binding region (TF-B3).

The protein resides in the nucleus. The chain is B3 domain-containing protein At3g11580 (ARF32) from Arabidopsis thaliana (Mouse-ear cress).